A 152-amino-acid polypeptide reads, in one-letter code: UPF0178 protein YE1167 (152 aa).

Belongs to the UPF0178 family.

This Yersinia enterocolitica serotype O:8 / biotype 1B (strain NCTC 13174 / 8081) protein is UPF0178 protein YE1167.